The sequence spans 257 residues: MDATQPTLVAEDVHKNFGTLEILKGISLTANKGDVVSIIGSSGSGKSTFLRCMNFLETPNKGRIAVGQEEVVVKTDAAGRLIGVDRKKIERMRMQLGMVFQSFNLWGHMTVLQNVMEGPLHVLKQPKGEVRDRAMDFLDKVGIANKHAAYPSQLSGGQQQRVSIARALAMQPSALLFDEPTSALDPELVGEVLKVIRKLAEEGRTMVVVTHEMGFARDVSSKVLFLEKGQIEEQGTPQEVFQNPTSPRCRAFLSSVL.

Residues 8–253 (LVAEDVHKNF…PTSPRCRAFL (246 aa)) form the ABC transporter domain. 40-47 (GSSGSGKS) contributes to the ATP binding site.

This sequence belongs to the ABC transporter superfamily.

It is found in the cell inner membrane. Its function is as follows. Component of the nopaline active transport system probably consisting of four subunits: Q, M, P and T. This system is also capable of transporting octopine provided that catabolic functions are induced with nopaline. The sequence is that of Nopaline permease ATP-binding protein P (nocP) from Agrobacterium fabrum (strain C58 / ATCC 33970) (Agrobacterium tumefaciens (strain C58)).